Here is a 467-residue protein sequence, read N- to C-terminus: MEQNVGYVVQIIGPVIDIRFESENLPAINNAIEIHFDGKKLVAEVAQHLGNDTVRCVALGSTDGLRRGVKAIDTGGPIKVPVGRGTLGRIFNVLGEPIDNKGEVVASDYWPIHRSAPSFEEQVPAVEIFETGIKVIDLLAPYAKGGKIGLFGGAGVGKTVLIMELIRNIATEHGGFSIFTGVGERTREGNDLWLDMNESGVIEKTVLVFGQMNEPPGARMRVALTGLTMAEYFRDVEGQDVLLFIDNIFRFIQAGSEVSALLGRIPSAVGYQPTLANEVGALQERITSTKKGSITSVQAIYVPADDLTDPAPATTFAHLDATTVLSRQIAELGIYPAVDPLDSTSRILDPRIVGEEHYYVARTVQQILQRYKELQDIIAILGMDELSEEDKLIVYRARKIQRFLSQPFFVAEAFTGRPGRYVKLKDTIRGFKEIIEGKMDHIPEQYFYMVGTIDEVYENYEKDMKGK.

Residue 152–159 (GGAGVGKT) participates in ATP binding.

The protein belongs to the ATPase alpha/beta chains family. As to quaternary structure, F-type ATPases have 2 components, CF(1) - the catalytic core - and CF(0) - the membrane proton channel. CF(1) has five subunits: alpha(3), beta(3), gamma(1), delta(1), epsilon(1). CF(0) has three main subunits: a(1), b(2) and c(9-12). The alpha and beta chains form an alternating ring which encloses part of the gamma chain. CF(1) is attached to CF(0) by a central stalk formed by the gamma and epsilon chains, while a peripheral stalk is formed by the delta and b chains.

The protein resides in the cell membrane. The enzyme catalyses ATP + H2O + 4 H(+)(in) = ADP + phosphate + 5 H(+)(out). Produces ATP from ADP in the presence of a proton gradient across the membrane. The catalytic sites are hosted primarily by the beta subunits. In Caldicellulosiruptor bescii (strain ATCC BAA-1888 / DSM 6725 / KCTC 15123 / Z-1320) (Anaerocellum thermophilum), this protein is ATP synthase subunit beta.